The following is a 360-amino-acid chain: DNA replication and repair protein RecF (360 aa).

Residue 30–37 (GENGAGKT) participates in ATP binding.

It belongs to the RecF family.

It localises to the cytoplasm. The RecF protein is involved in DNA metabolism; it is required for DNA replication and normal SOS inducibility. RecF binds preferentially to single-stranded, linear DNA. It also seems to bind ATP. In Deinococcus deserti (strain DSM 17065 / CIP 109153 / LMG 22923 / VCD115), this protein is DNA replication and repair protein RecF.